Here is a 193-residue protein sequence, read N- to C-terminus: Interleukin-18 (193 aa).

Residues 1-36 (MAAEPVEDNCINFVAMKFIDNTLYFIAEDDENLESD) constitute a propeptide that is removed on maturation.

Belongs to the IL-1 family. In terms of assembly, forms a ternary complex with ligand-binding receptor subunit IL18R1 and signaling receptor subunit IL18RAP at the plasma membrane. Mature IL18 first binds to IL18R1 forming a low affinity binary complex, which then interacts with IL18RAP to form a high affinity ternary complex that signals inside the cell. Interacts with cargo receptor TMED10; the interaction mediates the translocation from the cytoplasm into the ERGIC (endoplasmic reticulum-Golgi intermediate compartment) and thereby secretion. The pro-IL-18 precursor is processed by CASP1, CASP4 or CASP5 to yield its mature, active form. The pro-IL-18 precursor features autoinhibitory interactions between the propeptide and the post-cleavage-site region, preventing recognition by the IL18R1 receptor. Processing by CASP1, CASP4 or CASP5 induces conformational changes to generate critical receptor-binding sites. The mature form is then secreted and released in the extracellular milieu by passing through the gasdermin-D (GSDMD) pore. In contrast, cleavage by CASP3 inactivates IL18. In terms of tissue distribution, expressed in ovarian carcinoma but undetectable in normal ovarian epithelial cells. Resistant to proteolytic activation by caspase-1 and -4.

It localises to the cytoplasm. The protein resides in the cytosol. Its subcellular location is the secreted. Pro-inflammatory cytokine primarily involved in epithelial barrier repair, polarized T-helper 1 (Th1) cell and natural killer (NK) cell immune responses. Upon binding to IL18R1 and IL18RAP, forms a signaling ternary complex which activates NF-kappa-B, triggering synthesis of inflammatory mediators. Synergizes with IL12/interleukin-12 to induce IFNG synthesis from T-helper 1 (Th1) cells and natural killer (NK) cells. Involved in transduction of inflammation downstream of pyroptosis: its mature form is specifically released in the extracellular milieu by passing through the gasdermin-D (GSDMD) pore. This Homo sapiens (Human) protein is Interleukin-18.